A 190-amino-acid chain; its full sequence is MEVILLERVAKLGQMGETVNVRPGYARNFLLARGKALRATENNKKHFEAQRAQLEARNLERRNEAQTVAEKLDGQSFVLIRQSGETGVLYGSVSTRDLAEVVTKEGFTVERGQFVLNQPIKTLGLHTVPVTLHPEVEVKVTVNIARSPEEAERQARGESVTEREQFNLDDLGLEVGQALADAGEGADDRG.

Belongs to the bacterial ribosomal protein bL9 family.

In terms of biological role, binds to the 23S rRNA. The chain is Large ribosomal subunit protein bL9 from Methylorubrum populi (strain ATCC BAA-705 / NCIMB 13946 / BJ001) (Methylobacterium populi).